A 328-amino-acid polypeptide reads, in one-letter code: NADH:quinone reductase (328 aa).

FMN contacts are provided by residues 22–24 (GMQ), Thr75, Lys124, Ala150, 178–180 (SGG), and 201–202 (GT).

It belongs to the nitronate monooxygenase family. In terms of assembly, monomer. It depends on FMN as a cofactor.

The catalysed reaction is a quinone + NADH + H(+) = a quinol + NAD(+). Catalyzes the NADH-dependent reduction of a broad spectrum of quinone substrates, generating the corresponding hydroquinones. Highly prefers NADH to NADPH as a reducing substrate. Also displays a small NADH oxidase activity. Does not exhibit nitronate monooxygenase activity; is inactive against propionate 3-nitronate, 3-nitropropionate, nitroethane, 1-nitropropane, 2-nitropropane, and the anionic forms ethylnitronate, propyl-1-nitronate, and propyl-2-nitronate. Has no azoreductase activity since it is not able to reduce the azo dye methyl red with NADH. May be required to maintain an appropriate [NAD(+)]/[NADH] ratio for the catabolism of fatty acids in P.aeruginosa PAO1. This Pseudomonas aeruginosa (strain ATCC 15692 / DSM 22644 / CIP 104116 / JCM 14847 / LMG 12228 / 1C / PRS 101 / PAO1) protein is NADH:quinone reductase.